The following is a 269-amino-acid chain: MSKRTNNKKRKHSEYEKELEPENQDENQDEEFLEDKNKDKNQNKNKDKNKNKDMNKNKNKDMNKNNNKNNNKKKKENGNENVLNSQFYKNIKENRQITDIFKTLVECINEKIESLEDEENNNQDNENFIYICEKLREQFIKIYEKEIIEYKLFREIQALTIVKERELYDILKECDKRLALFRDHQSNCLKAKCDVESQMLSIERKEELNEYLYYDNDSIPENSNSTTTTTKKSKKKTKASFLTLVGKANFNTNFPSNFDRLFSISCERD.

Basic residues predominate over residues 1 to 12; that stretch reads MSKRTNNKKRKH. The tract at residues 1-82 is disordered; it reads MSKRTNNKKR…KKKENGNENV (82 aa). The span at 21 to 33 shows a compositional bias: acidic residues; that stretch reads PENQDENQDEEFL. Residues 34 to 63 show a composition bias toward basic and acidic residues; sequence EDKNKDKNQNKNKDKNKNKDMNKNKNKDMN.

This is an uncharacterized protein from Dictyostelium discoideum (Social amoeba).